The primary structure comprises 128 residues: Small ribosomal subunit protein eS8 (128 aa).

Belongs to the eukaryotic ribosomal protein eS8 family. As to quaternary structure, part of the 30S ribosomal subunit.

In Methanococcus aeolicus (strain ATCC BAA-1280 / DSM 17508 / OCM 812 / Nankai-3), this protein is Small ribosomal subunit protein eS8.